The primary structure comprises 159 residues: Probable inactive acireductone dioxygenase 1 (159 aa).

This sequence belongs to the acireductone dioxygenase (ARD) family.

It localises to the cytoplasm. Its subcellular location is the nucleus. Probable inactive acireductone dioxygenase. This is Probable inactive acireductone dioxygenase 1 from Caenorhabditis elegans.